The following is a 249-amino-acid chain: Diaminopimelate epimerase (249 aa).

The substrate site is built by N11 and N60. C69 serves as the catalytic Proton donor. Substrate contacts are provided by residues 70-71 (GN), N164, and 182-183 (ER). Residue C192 is the Proton acceptor of the active site. 193 to 194 (GT) lines the substrate pocket.

The protein belongs to the diaminopimelate epimerase family. Homodimer.

It is found in the cytoplasm. The enzyme catalyses (2S,6S)-2,6-diaminopimelate = meso-2,6-diaminopimelate. Its pathway is amino-acid biosynthesis; L-lysine biosynthesis via DAP pathway; DL-2,6-diaminopimelate from LL-2,6-diaminopimelate: step 1/1. In terms of biological role, catalyzes the stereoinversion of LL-2,6-diaminopimelate (L,L-DAP) to meso-diaminopimelate (meso-DAP), a precursor of L-lysine and an essential component of the bacterial peptidoglycan. The sequence is that of Diaminopimelate epimerase from Campylobacter jejuni subsp. jejuni serotype O:2 (strain ATCC 700819 / NCTC 11168).